The primary structure comprises 582 residues: Putative phospholipase B-like 2 (582 aa).

Positions 1 to 42 (MTRLIRSKKQFLIRSLHSVFYYLGSLLHSTFEMNVFIGLLLA) are cleaved as a signal peptide. Residues asparagine 91, asparagine 141, asparagine 178, asparagine 224, and asparagine 318 are each glycosylated (N-linked (GlcNAc...) asparagine). Cysteine 139 and cysteine 146 are disulfide-bonded. Cysteine 480 and cysteine 482 are oxidised to a cystine. A glycan (N-linked (GlcNAc...) asparagine) is linked at asparagine 502.

This sequence belongs to the phospholipase B-like family.

It localises to the secreted. Its function is as follows. Putative phospholipase. The chain is Putative phospholipase B-like 2 from Caenorhabditis elegans.